The primary structure comprises 175 residues: Large ribosomal subunit protein mL67 (175 aa).

This sequence belongs to the mitochondrion-specific ribosomal protein mL67 family. In terms of assembly, component of the mitochondrial large ribosomal subunit (mt-LSU). Mature yeast 74S mitochondrial ribosomes consist of a small (37S) and a large (54S) subunit. The 37S small subunit contains a 15S ribosomal RNA (15S mt-rRNA) and at least 32 different proteins. The 54S large subunit contains a 21S rRNA (21S mt-rRNA) and at least 45 different proteins.

The protein resides in the mitochondrion. Component of the mitochondrial ribosome (mitoribosome), a dedicated translation machinery responsible for the synthesis of mitochondrial genome-encoded proteins, including at least some of the essential transmembrane subunits of the mitochondrial respiratory chain. The mitoribosomes are attached to the mitochondrial inner membrane and translation products are cotranslationally integrated into the membrane. mL67/mhr1 also has extraribosomal functions, being involved in regulation of mitochondrial DNA recombination, maintenance and repair, and generation of homoplasmic cells. mL67/mhr1 also acts as transcription factor involved in regulation of RNA polymerase II-dependent transcription. This Schizosaccharomyces pombe (strain 972 / ATCC 24843) (Fission yeast) protein is Large ribosomal subunit protein mL67 (mhr1).